Here is a 330-residue protein sequence, read N- to C-terminus: Beta-ketoacyl-[acyl-carrier-protein] synthase III (330 aa).

Active-site residues include Cys-114 and His-255. Positions 256–260 (QANQR) are ACP-binding. Residue Asn-285 is part of the active site.

It belongs to the thiolase-like superfamily. FabH family. Homodimer.

It localises to the cytoplasm. The catalysed reaction is malonyl-[ACP] + acetyl-CoA + H(+) = 3-oxobutanoyl-[ACP] + CO2 + CoA. It functions in the pathway lipid metabolism; fatty acid biosynthesis. Its function is as follows. Catalyzes the condensation reaction of fatty acid synthesis by the addition to an acyl acceptor of two carbons from malonyl-ACP. Catalyzes the first condensation reaction which initiates fatty acid synthesis and may therefore play a role in governing the total rate of fatty acid production. Possesses both acetoacetyl-ACP synthase and acetyl transacylase activities. Its substrate specificity determines the biosynthesis of branched-chain and/or straight-chain of fatty acids. This is Beta-ketoacyl-[acyl-carrier-protein] synthase III from Trichormus variabilis (strain ATCC 29413 / PCC 7937) (Anabaena variabilis).